The primary structure comprises 223 residues: Endonuclease V (223 aa).

Residues Asp35 and Asp103 each coordinate Mg(2+).

Belongs to the endonuclease V family. Mg(2+) is required as a cofactor.

It localises to the cytoplasm. The enzyme catalyses Endonucleolytic cleavage at apurinic or apyrimidinic sites to products with a 5'-phosphate.. In terms of biological role, DNA repair enzyme involved in the repair of deaminated bases. Selectively cleaves double-stranded DNA at the second phosphodiester bond 3' to a deoxyinosine leaving behind the intact lesion on the nicked DNA. This Shigella dysenteriae serotype 1 (strain Sd197) protein is Endonuclease V.